The primary structure comprises 252 residues: tRNA (guanine-N(7)-)-methyltransferase (252 aa).

Residues Glu80, Glu105, Asp132, and Asp155 each contribute to the S-adenosyl-L-methionine site. Asp155 is an active-site residue. Substrate-binding positions include Lys159, Asp191, and Thr231–Glu234.

The protein belongs to the class I-like SAM-binding methyltransferase superfamily. TrmB family.

The catalysed reaction is guanosine(46) in tRNA + S-adenosyl-L-methionine = N(7)-methylguanosine(46) in tRNA + S-adenosyl-L-homocysteine. It participates in tRNA modification; N(7)-methylguanine-tRNA biosynthesis. In terms of biological role, catalyzes the formation of N(7)-methylguanine at position 46 (m7G46) in tRNA. This Actinobacillus succinogenes (strain ATCC 55618 / DSM 22257 / CCUG 43843 / 130Z) protein is tRNA (guanine-N(7)-)-methyltransferase.